The following is a 176-amino-acid chain: Large ribosomal subunit protein uL6 (176 aa).

This sequence belongs to the universal ribosomal protein uL6 family. As to quaternary structure, part of the 50S ribosomal subunit.

Functionally, this protein binds to the 23S rRNA, and is important in its secondary structure. It is located near the subunit interface in the base of the L7/L12 stalk, and near the tRNA binding site of the peptidyltransferase center. This is Large ribosomal subunit protein uL6 from Paraburkholderia xenovorans (strain LB400).